The following is a 332-amino-acid chain: Anthranilate phosphoribosyltransferase (332 aa).

5-phospho-alpha-D-ribose 1-diphosphate is bound by residues G79, 82–83, S87, 89–92, 107–115, and S119; these read GD, NIST, and KHGNRSVSS. G79 serves as a coordination point for anthranilate. S91 contributes to the Mg(2+) binding site. N110 contacts anthranilate. R165 contributes to the anthranilate binding site. Mg(2+) contacts are provided by D223 and E224.

It belongs to the anthranilate phosphoribosyltransferase family. As to quaternary structure, homodimer. The cofactor is Mg(2+).

The enzyme catalyses N-(5-phospho-beta-D-ribosyl)anthranilate + diphosphate = 5-phospho-alpha-D-ribose 1-diphosphate + anthranilate. Its pathway is amino-acid biosynthesis; L-tryptophan biosynthesis; L-tryptophan from chorismate: step 2/5. Functionally, catalyzes the transfer of the phosphoribosyl group of 5-phosphorylribose-1-pyrophosphate (PRPP) to anthranilate to yield N-(5'-phosphoribosyl)-anthranilate (PRA). This is Anthranilate phosphoribosyltransferase from Yersinia pestis bv. Antiqua (strain Antiqua).